Here is an 854-residue protein sequence, read N- to C-terminus: Aryl hydrocarbon receptor (854 aa).

Positions 1–9 are excised as a propeptide; it reads MSSGANITY. The interval 1-38 is disordered; sequence MSSGANITYASRKRRKPVQKTVKPIPAEGIKSNPSKRH. 2 short sequence motifs (nuclear localization signal) span residues 12-15 and 36-41; these read RKRR and KRHRDR. In terms of domain architecture, bHLH spans 26–79; the sequence is PAEGIKSNPSKRHRDRLNTELDRLASLLPFPQDVINKLDKLSVLRLSVSYLRAK. The DNA-binding stretch occupies residues 37 to 65; the sequence is RHRDRLNTELDRLASLLPFPQDVINKLDK. Required for maintaining the overall integrity of the AHR:ARNT heterodimer and its transcriptional activity stretches follow at residues 49-81, 116-124, and 264-266; these read LASLLPFPQDVINKLDKLSVLRLSVSYLRAKSF, LLQALNGFV, and FAI. The Nuclear export signal signature appears at 63–71; the sequence is LDKLSVLRL. The PAS 1 domain occupies 111 to 175; the sequence is QEGEFLLQAL…AEFQRQLHWA (65 aa). The PAS 2 domain occupies 270–340; it reads LQPPSILEIR…CAESHIRMIK (71 aa). The PAC domain maps to 346–387; the sequence is MTVFRLLAKHSRWRWVQSNARLIYRNGRPDYIIATQRPLTDE. Residues 425 to 452 form a disordered region; the sequence is LPIRTKSNTSRKDWAPQSTPSKDSFHPS. Residues 440-452 are compositionally biased toward polar residues; the sequence is PQSTPSKDSFHPS.

As to quaternary structure, homodimer. Heterodimer; efficient DNA binding requires dimerization with another bHLH protein. Interacts with ARNT; the heterodimer ARNT:AHR binds to core DNA sequence 5'-TGCGTG-3' within the dioxin response element (DRE) of target gene promoters and activates their transcription. Binds MYBBP1A. Interacts with coactivators including SRC-1, RIP140 and NOCA7, and with the corepressor SMRT. Interacts with NEDD8 and IVNS1ABP. Interacts with BMAL1. Interacts with HSP90AB1. Interacts with TIPARP; leading to mono-ADP-ribosylation of AHR and subsequent inhibition of AHR. In terms of processing, mono-ADP-ribosylated, leading to inhibit transcription activator activity of AHR.

The protein localises to the cytoplasm. It localises to the nucleus. Ligand-activated transcription factor that enables cells to adapt to changing conditions by sensing compounds from the environment, diet, microbiome and cellular metabolism, and which plays important roles in development, immunity and cancer. Upon ligand binding, translocates into the nucleus, where it heterodimerizes with ARNT and induces transcription by binding to xenobiotic response elements (XRE). Regulates a variety of biological processes, including angiogenesis, hematopoiesis, drug and lipid metabolism, cell motility and immune modulation. Xenobiotics can act as ligands: upon xenobiotic-binding, activates the expression of multiple phase I and II xenobiotic chemical metabolizing enzyme genes (such as the CYP1A1 gene). Mediates biochemical and toxic effects of halogenated aromatic hydrocarbons. Next to xenobiotics, natural ligands derived from plants, microbiota, and endogenous metabolism are potent AHR agonists. Tryptophan (Trp) derivatives constitute an important class of endogenous AHR ligands. Acts as a negative regulator of anti-tumor immunity: indoles and kynurenic acid generated by Trp catabolism act as ligand and activate AHR, thereby promoting AHR-driven cancer cell motility and suppressing adaptive immunity. Regulates the circadian clock by inhibiting the basal and circadian expression of the core circadian component PER1. Inhibits PER1 by repressing the CLOCK-BMAL1 heterodimer mediated transcriptional activation of PER1. The heterodimer ARNT:AHR binds to core DNA sequence 5'-TGCGTG-3' within the dioxin response element (DRE) of target gene promoters and activates their transcription. The protein is Aryl hydrocarbon receptor (Ahr) of Mus spretus (Western Mediterranean mouse).